The primary structure comprises 168 residues: Ribosome maturation factor RimM (168 aa).

One can recognise a PRC barrel domain in the interval 96–168 (VDEYYWGDLI…TIRVDWQKDW (73 aa)).

The protein belongs to the RimM family. Binds ribosomal protein uS19.

The protein resides in the cytoplasm. Functionally, an accessory protein needed during the final step in the assembly of 30S ribosomal subunit, possibly for assembly of the head region. Essential for efficient processing of 16S rRNA. May be needed both before and after RbfA during the maturation of 16S rRNA. It has affinity for free ribosomal 30S subunits but not for 70S ribosomes. This is Ribosome maturation factor RimM from Aromatoleum aromaticum (strain DSM 19018 / LMG 30748 / EbN1) (Azoarcus sp. (strain EbN1)).